A 369-amino-acid chain; its full sequence is MQFDLLKTDGVARRGTLTLAHGVIQTPVFMPVGTYGTVKAMTPQSLNDIGAQICLGNTFHLWLRPGLEVIAAHKGLHDFMNWQKPILTDSGGFQVFSLGAMRKITEEGVKFSSPHDGAKLFLTPEISMQIQKVLNSDIVMIFDECTPYPATHEEAAKSMRMSMRWAQRSRDEHNKLENSNALFGIVQGGMHEDLRDESVAGLCDIGFDGMAIGGLSVGEPKEDMARILAHTAPQLPTHKPRYLMGVGTPEDLVYSVSAGIDMFDCVMPTRNARNGHLFTRFGDVKIKNARYKLDTGPLDSSCSCYTCTNFTRAYLHHLFRNGEILGGMLNTIHNLHFYQTIMAEMRTAIEVEHFTEWAAGFARDRSSGQ.

Asp-89 (proton acceptor) is an active-site residue. Substrate contacts are provided by residues 89–93 (DSGGF), Asp-143, Gln-187, and Gly-214. The tract at residues 245–251 (GVGTPED) is RNA binding. Asp-264 acts as the Nucleophile in catalysis. The tract at residues 269-273 (TRNAR) is RNA binding; important for wobble base 34 recognition. 4 residues coordinate Zn(2+): Cys-302, Cys-304, Cys-307, and His-333.

Belongs to the queuine tRNA-ribosyltransferase family. As to quaternary structure, homodimer. Within each dimer, one monomer is responsible for RNA recognition and catalysis, while the other monomer binds to the replacement base PreQ1. Zn(2+) is required as a cofactor.

It carries out the reaction 7-aminomethyl-7-carbaguanine + guanosine(34) in tRNA = 7-aminomethyl-7-carbaguanosine(34) in tRNA + guanine. Its pathway is tRNA modification; tRNA-queuosine biosynthesis. In terms of biological role, catalyzes the base-exchange of a guanine (G) residue with the queuine precursor 7-aminomethyl-7-deazaguanine (PreQ1) at position 34 (anticodon wobble position) in tRNAs with GU(N) anticodons (tRNA-Asp, -Asn, -His and -Tyr). Catalysis occurs through a double-displacement mechanism. The nucleophile active site attacks the C1' of nucleotide 34 to detach the guanine base from the RNA, forming a covalent enzyme-RNA intermediate. The proton acceptor active site deprotonates the incoming PreQ1, allowing a nucleophilic attack on the C1' of the ribose to form the product. After dissociation, two additional enzymatic reactions on the tRNA convert PreQ1 to queuine (Q), resulting in the hypermodified nucleoside queuosine (7-(((4,5-cis-dihydroxy-2-cyclopenten-1-yl)amino)methyl)-7-deazaguanosine). The protein is Queuine tRNA-ribosyltransferase of Dechloromonas aromatica (strain RCB).